Consider the following 521-residue polypeptide: SET and MYND domain-containing protein DDB_G0292140 (521 aa).

The segment at 1 to 101 is disordered; that stretch reads MDGVIESPSN…KIKKSKKSIK (101 aa). Low complexity predominate over residues 12–55; it reads TIKISPSTSDSSTTTPIITTPPTQSTATVTTKAAATTTTTEAST. The span at 56–65 shows a compositional bias: pro residues; that stretch reads TPPPPQPTPT. The span at 66 to 90 shows a compositional bias: low complexity; that stretch reads PTQSTATVTKEVETTTETIPPIVTK. Residues 91–101 are compositionally biased toward basic residues; sequence GKIKKSKKSIK. An SET domain is found at 122–406; the sequence is WPIHVYSHPI…EGDELTISYI (285 aa). Residues C167, C170, C188, C191, C197, C201, H209, and C213 each contribute to the Zn(2+) site. The MYND-type zinc finger occupies 167–213; that stretch reads CQHCFLEVPLNQQILPTDFYMCEGCQRVGYCSANCRCIDYSQHRFEC. Residues 442–521 form a disordered region; sequence QTGTLEKDDD…QDHQNNDKSN (80 aa). The segment covering 448–469 has biased composition (acidic residues); it reads KDDDDNDDEKEKMDEDDDEKDD. Residues 470 to 485 are compositionally biased toward basic and acidic residues; the sequence is DINNKNDKKSKYKSDG. Acidic residues predominate over residues 486–495; it reads STDDEEDEDN. Residues 497-514 are compositionally biased toward low complexity; that stretch reads NNKNNNKNKNNNSNNQDH.

The protein belongs to the class V-like SAM-binding methyltransferase superfamily.

In terms of biological role, probable methyltransferase. This chain is SET and MYND domain-containing protein DDB_G0292140, found in Dictyostelium discoideum (Social amoeba).